The following is a 96-amino-acid chain: uncharacterized protein (96 aa).

The span at 1-18 (MSNVDRYDVHRDGIEKDR) shows a compositional bias: basic and acidic residues. Positions 1–96 (MSNVDRYDVH…REQHHQPQKQ (96 aa)) are disordered. Over residues 28-46 (QNGQSQSTMDNRPPWNNDT) the composition is skewed to polar residues. Residues 70-96 (TIDRQQEELTKNWTESLREQHHQPQKQ) show a composition bias toward basic and acidic residues.

This is an uncharacterized protein from Caenorhabditis elegans.